We begin with the raw amino-acid sequence, 378 residues long: Cytochrome b (378 aa).

4 helical membrane-spanning segments follow: residues 34–54 (FGSL…FLAM), 78–99 (WFLR…FIHV), 114–134 (WNTG…GYVL), and 179–199 (FFTF…IHLL). Heme b is bound by residues H84 and H98. Heme b-binding residues include H183 and H197. H202 is a binding site for a ubiquinone. A run of 4 helical transmembrane segments spans residues 227 to 247 (YKDI…IWKF), 289 to 309 (LGGV…PFTH), 321 to 341 (LNQI…WIGA), and 348 to 368 (YILT…INPL).

It belongs to the cytochrome b family. As to quaternary structure, the main subunits of complex b-c1 are: cytochrome b, cytochrome c1 and the Rieske protein. Requires heme b as cofactor.

The protein localises to the mitochondrion inner membrane. Component of the ubiquinol-cytochrome c reductase complex (complex III or cytochrome b-c1 complex) that is part of the mitochondrial respiratory chain. The b-c1 complex mediates electron transfer from ubiquinol to cytochrome c. Contributes to the generation of a proton gradient across the mitochondrial membrane that is then used for ATP synthesis. This Anopheles gambiae (African malaria mosquito) protein is Cytochrome b (mt:Cyt-b).